The chain runs to 309 residues: Aspartate carbamoyltransferase catalytic subunit (309 aa).

Positions 57 and 58 each coordinate carbamoyl phosphate. An L-aspartate-binding site is contributed by Lys-86. Residues Arg-107, His-135, and Gln-138 each contribute to the carbamoyl phosphate site. Positions 168 and 228 each coordinate L-aspartate. Leu-267 and Pro-268 together coordinate carbamoyl phosphate.

The protein belongs to the aspartate/ornithine carbamoyltransferase superfamily. ATCase family. Heterooligomer of catalytic and regulatory chains.

The enzyme catalyses carbamoyl phosphate + L-aspartate = N-carbamoyl-L-aspartate + phosphate + H(+). Its pathway is pyrimidine metabolism; UMP biosynthesis via de novo pathway; (S)-dihydroorotate from bicarbonate: step 2/3. Functionally, catalyzes the condensation of carbamoyl phosphate and aspartate to form carbamoyl aspartate and inorganic phosphate, the committed step in the de novo pyrimidine nucleotide biosynthesis pathway. This Cenarchaeum symbiosum (strain A) protein is Aspartate carbamoyltransferase catalytic subunit.